A 396-amino-acid chain; its full sequence is Probable sugar efflux transporter (396 aa).

The Cytoplasmic segment spans residues 1 to 14; it reads MTTNTVSRKVAWLR. Residues 15-35 traverse the membrane as a helical segment; that stretch reads VVTLAVAAFIFNTTEFVPVGL. At 36–49 the chain is on the periplasmic side; it reads LSDIAQSFHMQTAQ. A helical transmembrane segment spans residues 50-70; sequence VGIMLTIYAWVVALMSLPFML. At 71–80 the chain is on the cytoplasmic side; the sequence is MTSQVERRKL. Residues 81–101 traverse the membrane as a helical segment; the sequence is LICLFVVFIASHVLSFLSWSF. Thr-102 is a topological domain (periplasmic). Residues 103-123 form a helical membrane-spanning segment; the sequence is VLVISRIGVAFAHAIFWSITA. At 124 to 135 the chain is on the cytoplasmic side; sequence SLAIRMAPAGKR. A helical membrane pass occupies residues 136–156; the sequence is AQALSLIATGTALAMVLGLPL. Over 157–169 the chain is Periplasmic; sequence GRIVGQYFGWRMT. Residues 170 to 190 traverse the membrane as a helical segment; it reads FFAIGIGALITLLCLIKLLPL. Residues 191-208 lie on the Cytoplasmic side of the membrane; sequence LPSEHSGSLKSLPLLFRR. Residues 209–229 form a helical membrane-spanning segment; the sequence is PALMSIYLLTVVVVTAHYTAY. Residues 230-245 are Periplasmic-facing; that stretch reads SYIEPFVQNIAGFSAN. Residues 246-266 form a helical membrane-spanning segment; sequence FATALLLLLGGAGIIGSVIFG. Topologically, residues 267–274 are cytoplasmic; it reads KLGNQYAS. Residues 275-295 traverse the membrane as a helical segment; that stretch reads ALVSTAIALLLVCLALLLPAA. At 296 to 298 the chain is on the periplasmic side; the sequence is NSE. The helical transmembrane segment at 299–319 threads the bilayer; that stretch reads IHLGVLSIFWGIAMMIIGLGM. Residues 320-332 are Cytoplasmic-facing; it reads QVKVLALAPDATD. The chain crosses the membrane as a helical span at residues 333-353; that stretch reads VAMALFSGIFNIGIGAGALVG. Topologically, residues 354 to 363 are periplasmic; sequence NQVSLHWSMS. The helical transmembrane segment at 364–384 threads the bilayer; that stretch reads MIGYVGTVPAFAALIWSIIIF. Over 385 to 396 the chain is Cytoplasmic; sequence RRWPVTLEEQTQ.

This sequence belongs to the major facilitator superfamily. SotB (TC 2.A.1.2) family.

It is found in the cell inner membrane. Its function is as follows. Involved in the efflux of sugars. The physiological role may be the reduction of the intracellular concentration of toxic sugars or sugar metabolites. The sequence is that of Probable sugar efflux transporter from Escherichia coli O157:H7.